Reading from the N-terminus, the 1051-residue chain is Probable valine--tRNA ligase, mitochondrial (1051 aa).

A mitochondrion-targeting transit peptide spans 1-20; that stretch reads MNKLLFLSKKSSTSNLYRFY. Positions 71–81 match the 'HIGH' region motif; sequence PNVTGSLHIGH. The 'KMSKS' region signature appears at 606-610; that stretch reads KMSKS. Position 609 (Lys-609) interacts with ATP. Residues 972–1019 adopt a coiled-coil conformation; the sequence is KELQISIEFDKEINNQLNQKLINPNQSNDKKILKLENFIKQLQDEIDN.

This sequence belongs to the class-I aminoacyl-tRNA synthetase family.

The protein resides in the mitochondrion. The catalysed reaction is tRNA(Val) + L-valine + ATP = L-valyl-tRNA(Val) + AMP + diphosphate. The chain is Probable valine--tRNA ligase, mitochondrial (valS2) from Dictyostelium discoideum (Social amoeba).